A 120-amino-acid chain; its full sequence is Small ribosomal subunit protein uS11 (120 aa).

This sequence belongs to the universal ribosomal protein uS11 family. As to quaternary structure, part of the 30S ribosomal subunit. Interacts with proteins S7 and S18. Binds to IF-3.

Located on the platform of the 30S subunit, it bridges several disparate RNA helices of the 16S rRNA. Forms part of the Shine-Dalgarno cleft in the 70S ribosome. This chain is Small ribosomal subunit protein uS11, found in Neorickettsia sennetsu (strain ATCC VR-367 / Miyayama) (Ehrlichia sennetsu).